The chain runs to 356 residues: Glutamine synthetase PR-1 (356 aa).

Residues 19–99 (VIAEYIWIGG…VICDAYTPAG (81 aa)) form the GS beta-grasp domain. Residues 41–64 (PGPVKNPSELPKWNYDGSSTGQAP) form a disordered region. In terms of domain architecture, GS catalytic spans 106 to 356 (KRHNAAKIFS…IADTTILWKP (251 aa)).

The protein belongs to the glutamine synthetase family. As to quaternary structure, homooctamer. Roots.

Its subcellular location is the cytoplasm. The enzyme catalyses L-glutamate + NH4(+) + ATP = L-glutamine + ADP + phosphate + H(+). The sequence is that of Glutamine synthetase PR-1 from Phaseolus vulgaris (Kidney bean).